Consider the following 185-residue polypeptide: Photosystem I assembly protein Ycf4 (185 aa).

The next 2 helical transmembrane spans lie at 21 to 43 (NFCW…TSSY) and 63 to 85 (GLVM…CTIL).

The protein belongs to the Ycf4 family.

It is found in the plastid. Its subcellular location is the chloroplast thylakoid membrane. Seems to be required for the assembly of the photosystem I complex. The polypeptide is Photosystem I assembly protein Ycf4 (Brassica oleracea (Wild cabbage)).